We begin with the raw amino-acid sequence, 144 residues long: F420-non-reducing hydrogenase vhc iron-sulfur subunit D (144 aa).

This sequence belongs to the MvhD/VhuD family. The F420-non-reducing hydrogenase vhc is composed of three subunits; VhcA, VhcD and VhcG. [2Fe-2S] cluster serves as cofactor.

The protein is F420-non-reducing hydrogenase vhc iron-sulfur subunit D (vhcD) of Methanococcus voltae.